The following is a 386-amino-acid chain: O-methyltransferase 11 (386 aa).

S-adenosyl-L-homocysteine is bound by residues Ser207, Gly231, Asp254, Asp274, and Lys288. Asp254 lines the S-adenosyl-L-methionine pocket. Catalysis depends on His292, which acts as the Proton acceptor.

The protein belongs to the class I-like SAM-binding methyltransferase superfamily. Cation-independent O-methyltransferase family. As to quaternary structure, homodimer.

It catalyses the reaction dopamine + S-adenosyl-L-methionine = 4-methoxytyramine + S-adenosyl-L-homocysteine + H(+). The enzyme catalyses 3,4-dihydroxy-5-methoxyphenethylamine + S-adenosyl-L-methionine = 3-hydroxy-4,5-dimethoxyphenethylamine + S-adenosyl-L-homocysteine + H(+). The catalysed reaction is 3-hydroxy-4,5-dimethoxyphenethylamine + S-adenosyl-L-methionine = mescaline + S-adenosyl-L-homocysteine + H(+). It carries out the reaction 4-hydroxy-3,5-dimethoxyphenethylamine + S-adenosyl-L-methionine = mescaline + S-adenosyl-L-homocysteine + H(+). The protein operates within aromatic compound metabolism. It participates in alkaloid biosynthesis. Its function is as follows. O-methyltransferase participating in the biosynthesis of natural products derived from phenylethylamine, including mescaline, a natural hallucinogen potentially used in psychotherapeutic treatments. Catalyzes the O-methylation of mescaline para hydroxyl groups, using dopamine, 3,4-dihydroxy-5-methoxyphenethylamine, 3-hydroxy-4,5-dimethoxyphenethylamine and 4-hydroxy-3,5-dimethoxyphenethylamine as substrates. The sequence is that of O-methyltransferase 11 from Lophophora williamsii (Peyote).